The primary structure comprises 293 residues: Nucleotide-binding protein BC_5156 (293 aa).

14-21 (GMSGAGKT) is a binding site for ATP. 65–68 (DLRG) is a GTP binding site.

Belongs to the RapZ-like family.

In terms of biological role, displays ATPase and GTPase activities. The polypeptide is Nucleotide-binding protein BC_5156 (Bacillus cereus (strain ATCC 14579 / DSM 31 / CCUG 7414 / JCM 2152 / NBRC 15305 / NCIMB 9373 / NCTC 2599 / NRRL B-3711)).